Reading from the N-terminus, the 190-residue chain is RING finger protein 227 (190 aa).

Residues 18–81 (CNICYRPFNL…RRVVTCPFCR (64 aa)) form an RING-type zinc finger. Residues 111–145 (KCERDEAGNPAKESSDADGEAEEEGESEKGAGPRS) are disordered. The segment covering 126–136 (DADGEAEEEGE) has biased composition (acidic residues).

This chain is RING finger protein 227, found in Homo sapiens (Human).